A 360-amino-acid polypeptide reads, in one-letter code: Peptide chain release factor 1 (360 aa).

Gln235 is modified (N5-methylglutamine). A disordered region spans residues 285-311 (KRQQAQASERRNLLGSGDRSDRHRTYN). Residues 292–308 (SERRNLLGSGDRSDRHR) are compositionally biased toward basic and acidic residues.

The protein belongs to the prokaryotic/mitochondrial release factor family. Post-translationally, methylated by PrmC. Methylation increases the termination efficiency of RF1.

It localises to the cytoplasm. Functionally, peptide chain release factor 1 directs the termination of translation in response to the peptide chain termination codons UAG and UAA. This is Peptide chain release factor 1 from Hamiltonella defensa subsp. Acyrthosiphon pisum (strain 5AT).